We begin with the raw amino-acid sequence, 453 residues long: Luminescence regulatory protein LuxO (453 aa).

The Response regulatory domain occupies 1-112 (MVEDTASVAA…RLRVTVNNAI (112 aa)). Residue Asp-47 is modified to 4-aspartylphosphate. The Sigma-54 factor interaction domain maps to 133–362 (FIGSSQTMQQ…LQNVLRNIVV (230 aa)). Residues 161-168 (GESGTGKE) and 224-233 (ADGGTLFLDE) each bind ATP.

Functionally, acts negatively to control the expression of luminescence. At low cell density, LuxO is phosphorylated, and together with sigma-54, causes repression of the luxCDABEGH operon. This repression could be indirect, LuxO could activate a negative regulator of luminescence. At high cell density, LuxO is dephosphorylated and inactive, therefore the luxCDABEGH operon is not repressed and light is emitted. LuxO and sigma-54 have also a role in activating the production of siderophore and in regulating the rugose colony morphology phenotype. The polypeptide is Luminescence regulatory protein LuxO (luxO) (Vibrio campbellii (strain ATCC BAA-1116)).